The chain runs to 81 residues: Neuronatin (81 aa).

It belongs to the neuronatin family.

Functionally, may participate in the maintenance of segment identity in the hindbrain and pituitary development, and maturation or maintenance of the overall structure of the nervous system. May function as a regulatory subunit of ion channels. This is Neuronatin (NNAT) from Sus scrofa (Pig).